Reading from the N-terminus, the 472-residue chain is Methanethiol oxidase (472 aa).

It belongs to the selenium-binding protein family.

The protein localises to the nucleus. It localises to the cytoplasm. Its subcellular location is the cytosol. The protein resides in the membrane. The enzyme catalyses methanethiol + O2 + H2O = hydrogen sulfide + formaldehyde + H2O2 + H(+). It participates in organosulfur degradation. Its function is as follows. Catalyzes the oxidation of methanethiol, an organosulfur compound known to be produced in substantial amounts by gut bacteria. Selenium-binding protein which may be involved in the sensing of reactive xenobiotics in the cytoplasm. May be involved in intra-Golgi protein transport. This is Methanethiol oxidase (selenbp1) from Xenopus tropicalis (Western clawed frog).